A 461-amino-acid polypeptide reads, in one-letter code: Phytase A (461 aa).

C22 and C31 are oxidised to a cystine. 1D-myo-inositol hexakisphosphate is bound by residues Q41, Y42, R71, H72, R75, and T78. 4 cysteine pairs are disulfide-bonded: C61–C405, C205–C456, C254–C272, and C427–C435. H72 functions as the Nucleophile in the catalytic mechanism. N95 and N110 each carry an N-linked (GlcNAc...) asparagine glycan. R155 contributes to the 1D-myo-inositol hexakisphosphate binding site. N-linked (GlcNAc...) asparagine glycosylation occurs at N197. A 1D-myo-inositol hexakisphosphate-binding site is contributed by K291. N-linked (GlcNAc...) asparagine glycans are attached at residues N329 and N343. The 1D-myo-inositol hexakisphosphate site is built by H352 and D353. N-linked (GlcNAc...) asparagine glycosylation occurs at N367.

It belongs to the histidine acid phosphatase family. As to quaternary structure, monomer. In terms of processing, glycosylated.

It is found in the secreted. The enzyme catalyses 1D-myo-inositol hexakisphosphate + H2O = 1D-myo-inositol 1,2,4,5,6-pentakisphosphate + phosphate. It carries out the reaction 1D-myo-inositol 1,2,4,5,6-pentakisphosphate + H2O = 1D-myo-inositol 1,2,5,6-tetrakisphosphate + phosphate. It catalyses the reaction 1D-myo-inositol 1,2,5,6-tetrakisphosphate + H2O = 1D-myo-inositol 1,2,6-trisphosphate + phosphate. The catalysed reaction is 1D-myo-inositol 1,2,6-trisphosphate + H2O = 1D-myo-inositol 1,2-bisphosphate + phosphate. The enzyme catalyses 1D-myo-inositol 1,2-bisphosphate + H2O = 1D-myo-inositol 2-phosphate + phosphate. Functionally, catalyzes the phosphate monoester hydrolysis of phytic acid (myo-inositol hexakisphosphate), which results in the stepwise formation of myo-inositol pentakis-, tetrakis-, tris-, bis-, and monophosphates, as well as the liberation of inorganic phosphate. Myo-inositol 2-monophosphate is the end product. The polypeptide is Phytase A (Penicillium oxalicum).